The chain runs to 159 residues: Protein-export protein SecB (159 aa).

Belongs to the SecB family. Homotetramer, a dimer of dimers. One homotetramer interacts with 1 SecA dimer.

The protein localises to the cytoplasm. One of the proteins required for the normal export of preproteins out of the cell cytoplasm. It is a molecular chaperone that binds to a subset of precursor proteins, maintaining them in a translocation-competent state. It also specifically binds to its receptor SecA. This chain is Protein-export protein SecB, found in Marinomonas sp. (strain MWYL1).